Reading from the N-terminus, the 246-residue chain is DNA polymerase sliding clamp 3 (246 aa).

Belongs to the PCNA family. As to quaternary structure, the subunits circularize to form a toroid; DNA passes through its center. Replication factor C (RFC) is required to load the toroid on the DNA. Forms dimeric complexes with PCNA1 and PCNA2, and trimeric complexes with PCNA123 and PCNA323; does not form homotrimers. Crystal structures show a heterotetramer of 2 PCNA2 and 2 PCNA3, which would be large enough to clamp a Holliday junction.

Its function is as follows. Sliding clamp subunit that acts as a moving platform for DNA processing. Responsible for tethering the catalytic subunit of DNA polymerase and other proteins to DNA during high-speed replication. Both trimeric complexes inhibit DNA ligase and both 3'-5' and 5'-3' activity of Hel308 (Hjm) helicase, but stimulate Hjc, the Holliday junction cleavage enzyme. This chain is DNA polymerase sliding clamp 3, found in Sulfurisphaera tokodaii (strain DSM 16993 / JCM 10545 / NBRC 100140 / 7) (Sulfolobus tokodaii).